A 142-amino-acid polypeptide reads, in one-letter code: Large ribosomal subunit protein uL13 (142 aa).

It belongs to the universal ribosomal protein uL13 family. In terms of assembly, part of the 50S ribosomal subunit.

Functionally, this protein is one of the early assembly proteins of the 50S ribosomal subunit, although it is not seen to bind rRNA by itself. It is important during the early stages of 50S assembly. This chain is Large ribosomal subunit protein uL13, found in Psychrobacter cryohalolentis (strain ATCC BAA-1226 / DSM 17306 / VKM B-2378 / K5).